The sequence spans 271 residues: Large ribosomal subunit protein eL8 (271 aa).

This sequence belongs to the eukaryotic ribosomal protein eL8 family.

This is Large ribosomal subunit protein eL8 (RpL7A) from Drosophila melanogaster (Fruit fly).